A 349-amino-acid chain; its full sequence is Methylthioribose-1-phosphate isomerase (349 aa).

Substrate-binding positions include R49–A51, R92, and Q199. Residue D240 is the Proton donor of the active site. N250 to K251 provides a ligand contact to substrate.

Belongs to the eIF-2B alpha/beta/delta subunits family. MtnA subfamily.

It catalyses the reaction 5-(methylsulfanyl)-alpha-D-ribose 1-phosphate = 5-(methylsulfanyl)-D-ribulose 1-phosphate. It participates in amino-acid biosynthesis; L-methionine biosynthesis via salvage pathway; L-methionine from S-methyl-5-thio-alpha-D-ribose 1-phosphate: step 1/6. Functionally, catalyzes the interconversion of methylthioribose-1-phosphate (MTR-1-P) into methylthioribulose-1-phosphate (MTRu-1-P). The chain is Methylthioribose-1-phosphate isomerase from Syntrophobacter fumaroxidans (strain DSM 10017 / MPOB).